A 246-amino-acid chain; its full sequence is Probable transcriptional regulatory protein Rmag_0394 (246 aa).

Belongs to the TACO1 family.

The protein resides in the cytoplasm. The chain is Probable transcriptional regulatory protein Rmag_0394 from Ruthia magnifica subsp. Calyptogena magnifica.